A 1103-amino-acid chain; its full sequence is PALM2-AKAP2 fusion protein (1103 aa).

Disordered stretches follow at residues 178–197 and 304–396; these read ESAS…KKPP and YNGT…SSRD. Over residues 179–189 the composition is skewed to polar residues; the sequence is SASNATETSGP. Phosphoserine occurs at positions 322, 352, and 383. The segment covering 380–392 has biased composition (low complexity); the sequence is VPVSPSSTTSSRC. Lysine 405 participates in a covalent cross-link: Glycyl lysine isopeptide (Lys-Gly) (interchain with G-Cter in SUMO1); alternate. Lysine 405 participates in a covalent cross-link: Glycyl lysine isopeptide (Lys-Gly) (interchain with G-Cter in SUMO2); alternate. Residues 444 to 521 adopt a coiled-coil conformation; sequence EEMLELEKER…QKQLQQQQQQ (78 aa). 2 disordered regions span residues 483–544 and 566–662; these read EQLD…DKAK and NSRQ…SKLW. The segment covering 490 to 505 has biased composition (basic and acidic residues); that stretch reads LESHKKYKERKERRAQ. The segment covering 506-521 has biased composition (low complexity); it reads QEQLLLQKQLQQQQQQ. A compositionally biased stretch (polar residues) spans 522 to 531; the sequence is PPSQLCTAPA. Positions 533–544 are enriched in basic and acidic residues; it reads SHERASMIDKAK. Positions 566 to 579 are enriched in polar residues; the sequence is NSRQAVAKGQSTPR. A phosphoserine mark is found at serine 567 and serine 624. Residues 633 to 643 show a composition bias toward polar residues; the sequence is AAGSQGNTASQ. Residues serine 692, serine 696, and serine 748 each carry the phosphoserine modification. Polar residues predominate over residues 745-763; it reads QENSLADFSLPQTPQTDNP. Residues 745–794 form a disordered region; that stretch reads QENSLADFSLPQTPQTDNPSEGRGEGVSKSFSDHGFYSPSSTLGDSPLVD. A Phosphothreonine modification is found at threonine 757. The tract at residues 797-810 is PKA-RII subunit binding domain; that stretch reads LEYQAGLLVQNAIQ. The span at 817–829 shows a compositional bias: basic and acidic residues; sequence VDKAVSKTSRDGA. Positions 817-907 are disordered; it reads VDKAVSKTSR…GPINMEETRP (91 aa). A Phosphoserine modification is found at serine 862. Basic and acidic residues predominate over residues 865 to 886; the sequence is QEKRDVLPKILPAEDRALRERG. The stretch at 941–979 forms a coiled coil; that stretch reads KLRSRKQRTLSMIEEEIRAAQEREEELKRQRQVLQSTQS. 4 positions are modified to phosphoserine: serine 951, serine 979, serine 1009, and serine 1016. The segment at 962-1035 is disordered; it reads EREEELKRQR…AAGTQRPKNL (74 aa). Polar residues predominate over residues 976–990; that stretch reads STQSPRTKNAPSLPS.

As to expression, expressed in infantile heart and muscle, and fibroblasts.

The protein localises to the apical cell membrane. In terms of biological role, binds to regulatory subunit (RII) of protein kinase A. May be involved in establishing polarity in signaling systems or in integrating PKA-RII isoforms with downstream effectors to capture, amplify and focus diffuse, trans-cellular signals carried by cAMP. Binds to and modulates the structure of the actin cytoskeleton. The protein is PALM2-AKAP2 fusion protein of Homo sapiens (Human).